A 548-amino-acid chain; its full sequence is Chaperonin GroEL 1 (548 aa).

ATP-binding positions include 30–33 (TLGP), Lys51, 87–91 (DGTTT), Gly415, 479–481 (NAA), and Asp495.

This sequence belongs to the chaperonin (HSP60) family. In terms of assembly, forms a cylinder of 14 subunits composed of two heptameric rings stacked back-to-back. Interacts with the co-chaperonin GroES.

The protein localises to the cytoplasm. The enzyme catalyses ATP + H2O + a folded polypeptide = ADP + phosphate + an unfolded polypeptide.. In terms of biological role, together with its co-chaperonin GroES, plays an essential role in assisting protein folding. The GroEL-GroES system forms a nano-cage that allows encapsulation of the non-native substrate proteins and provides a physical environment optimized to promote and accelerate protein folding. This Vibrio harveyi (Beneckea harveyi) protein is Chaperonin GroEL 1.